The chain runs to 833 residues: Leucine--tRNA ligase (833 aa).

The 'HIGH' region motif lies at 41-52; sequence PYPSGAGLHVGH. The 'KMSKS' region motif lies at 610–614; the sequence is KMSKS. K613 serves as a coordination point for ATP.

Belongs to the class-I aminoacyl-tRNA synthetase family.

The protein localises to the cytoplasm. The catalysed reaction is tRNA(Leu) + L-leucine + ATP = L-leucyl-tRNA(Leu) + AMP + diphosphate. This chain is Leucine--tRNA ligase, found in Streptococcus pneumoniae serotype 19F (strain G54).